Consider the following 338-residue polypeptide: GTP 3',8-cyclase (338 aa).

The Radical SAM core domain occupies 8–227 (KLQRPLKDLR…DMIHQVMPLE (220 aa)). Arg17 contacts GTP. Positions 24 and 28 each coordinate [4Fe-4S] cluster. Tyr30 contacts S-adenosyl-L-methionine. Position 31 (Cys31) interacts with [4Fe-4S] cluster. Arg71 serves as a coordination point for GTP. Gly75 serves as a coordination point for S-adenosyl-L-methionine. Residue Thr102 participates in GTP binding. S-adenosyl-L-methionine is bound at residue Ser126. Lys163 provides a ligand contact to GTP. Met197 lines the S-adenosyl-L-methionine pocket. The [4Fe-4S] cluster site is built by Cys261 and Cys264. A GTP-binding site is contributed by 266–268 (RAR). Cys278 serves as a coordination point for [4Fe-4S] cluster.

This sequence belongs to the radical SAM superfamily. MoaA family. Monomer and homodimer. [4Fe-4S] cluster is required as a cofactor.

The catalysed reaction is GTP + AH2 + S-adenosyl-L-methionine = (8S)-3',8-cyclo-7,8-dihydroguanosine 5'-triphosphate + 5'-deoxyadenosine + L-methionine + A + H(+). The protein operates within cofactor biosynthesis; molybdopterin biosynthesis. In terms of biological role, catalyzes the cyclization of GTP to (8S)-3',8-cyclo-7,8-dihydroguanosine 5'-triphosphate. The chain is GTP 3',8-cyclase from Bacillus anthracis (strain CDC 684 / NRRL 3495).